The primary structure comprises 178 residues: Large ribosomal subunit protein uL6 (178 aa).

The protein belongs to the universal ribosomal protein uL6 family. In terms of assembly, part of the 50S ribosomal subunit.

Functionally, this protein binds to the 23S rRNA, and is important in its secondary structure. It is located near the subunit interface in the base of the L7/L12 stalk, and near the tRNA binding site of the peptidyltransferase center. This is Large ribosomal subunit protein uL6 from Ligilactobacillus salivarius (strain UCC118) (Lactobacillus salivarius).